The chain runs to 123 residues: Large ribosomal subunit protein bL12 (123 aa).

The protein belongs to the bacterial ribosomal protein bL12 family. In terms of assembly, homodimer. Part of the ribosomal stalk of the 50S ribosomal subunit. Forms a multimeric L10(L12)X complex, where L10 forms an elongated spine to which 2 to 4 L12 dimers bind in a sequential fashion. Binds GTP-bound translation factors.

Forms part of the ribosomal stalk which helps the ribosome interact with GTP-bound translation factors. Is thus essential for accurate translation. This Aliarcobacter butzleri (strain RM4018) (Arcobacter butzleri) protein is Large ribosomal subunit protein bL12.